The sequence spans 457 residues: Hydrogenobyrinate a,c-diamide synthase (457 aa).

One can recognise a GATase cobBQ-type domain in the interval 255-441 (TVAIAAGRAF…LHTHPAATPG (187 aa)). Cys337 serves as the catalytic Nucleophile.

This sequence belongs to the CobB/CbiA family. Mg(2+) is required as a cofactor.

The catalysed reaction is hydrogenobyrinate + 2 L-glutamine + 2 ATP + 2 H2O = hydrogenobyrinate a,c-diamide + 2 L-glutamate + 2 ADP + 2 phosphate + 2 H(+). It functions in the pathway cofactor biosynthesis; adenosylcobalamin biosynthesis; cob(II)yrinate a,c-diamide from precorrin-2 (aerobic route): step 9/10. Its function is as follows. Catalyzes the ATP-dependent amidation of the two carboxylate groups at positions a and c of hydrogenobyrinate, using either L-glutamine or ammonia as the nitrogen source. The protein is Hydrogenobyrinate a,c-diamide synthase of Mycobacterium bovis (strain ATCC BAA-935 / AF2122/97).